A 404-amino-acid chain; its full sequence is MKQLTILGSTGSIGTSTLAVVRANPQLFAVKALVAGRNVELMTGQCLEFRPAYAAMSDKRAAEELRLRLKDLNVATEVLSGEQAACDLAALDDVDQVMAAIVGAAGLLPTLAAIRAGKKVLLANKESLVTCGRLFLEAVSASKAQLLPIDSEHNAIFQSLPASLQQQLGYASLENNGIESIILTGSGGPFRDTPLVELPHMTPDQACAHPNWSMGRKISVDSATMMNKGLEYIEARWLFNATDAQMEVILHPQSVIHSMVRYRDGSVIAQLGSPDMRTPIAHAMAWPQRVESGVQPLDFTRMSAMTFAQPDYTRYPCLKLAMDASKAGQAATTTLNAANEIAVAAFLASEIRFTDIAALNVAVLDTLSCQEPQNVDAVIAIDREARAAAQALLPRFAAKRASVI.

Residues Thr-10, Gly-11, Ser-12, Ile-13, Gly-36, Arg-37, Asn-38, and Asn-124 each coordinate NADPH. Lys-125 is a binding site for 1-deoxy-D-xylulose 5-phosphate. Glu-126 lines the NADPH pocket. Asp-150 lines the Mn(2+) pocket. 1-deoxy-D-xylulose 5-phosphate is bound by residues Ser-151, Glu-152, Ser-186, and His-209. Glu-152 lines the Mn(2+) pocket. Gly-215 provides a ligand contact to NADPH. Residues Ser-222, Asn-227, Lys-228, and Glu-231 each coordinate 1-deoxy-D-xylulose 5-phosphate. Glu-231 is a Mn(2+) binding site.

Belongs to the DXR family. In terms of assembly, homodimer. Mg(2+) serves as cofactor. It depends on Mn(2+) as a cofactor.

The enzyme catalyses 2-C-methyl-D-erythritol 4-phosphate + NADP(+) = 1-deoxy-D-xylulose 5-phosphate + NADPH + H(+). It functions in the pathway isoprenoid biosynthesis; isopentenyl diphosphate biosynthesis via DXP pathway; isopentenyl diphosphate from 1-deoxy-D-xylulose 5-phosphate: step 1/6. In terms of biological role, catalyzes the NADPH-dependent rearrangement and reduction of 1-deoxy-D-xylulose-5-phosphate (DXP) to 2-C-methyl-D-erythritol 4-phosphate (MEP). The protein is 1-deoxy-D-xylulose 5-phosphate reductoisomerase of Erwinia tasmaniensis (strain DSM 17950 / CFBP 7177 / CIP 109463 / NCPPB 4357 / Et1/99).